Reading from the N-terminus, the 1801-residue chain is U3 small nucleolar RNA-associated protein 10 (1801 aa).

The stretch at 582–619 is one HEAT 1 repeat; that stretch reads IDFQALVPFVLVALGDVSERIRREAAAVLAALGALYKK. 2 helical membrane-spanning segments follow: residues 945–965 and 1001–1021; these read IQSG…AIVN and ALLL…HSVM. 4 HEAT repeats span residues 1045-1082, 1252-1289, 1296-1334, and 1757-1794; these read QTID…AFEH, LSLI…QNPE, NRML…KYGK, and ALLP…VLGE.

Belongs to the HEATR1/UTP10 family. As to quaternary structure, component of the ribosomal small subunit (SSU) processome.

The protein localises to the nucleus. It is found in the nucleolus. The protein resides in the membrane. Involved in nucleolar processing of pre-18S ribosomal RNA. Involved in ribosome biosynthesis. In Aspergillus terreus (strain NIH 2624 / FGSC A1156), this protein is U3 small nucleolar RNA-associated protein 10.